The sequence spans 344 residues: Protein RecA (344 aa).

Position 65-72 (65-72 (GPESSGKT)) interacts with ATP. Positions 323-337 (ELREKFQPAEAPREA) are enriched in basic and acidic residues. Residues 323–344 (ELREKFQPAEAPREAGDDEDKE) form a disordered region.

The protein belongs to the RecA family.

It localises to the cytoplasm. Can catalyze the hydrolysis of ATP in the presence of single-stranded DNA, the ATP-dependent uptake of single-stranded DNA by duplex DNA, and the ATP-dependent hybridization of homologous single-stranded DNAs. It interacts with LexA causing its activation and leading to its autocatalytic cleavage. This is Protein RecA from Xanthomonas euvesicatoria pv. vesicatoria (strain 85-10) (Xanthomonas campestris pv. vesicatoria).